Reading from the N-terminus, the 147-residue chain is Large ribosomal subunit protein bL9 (147 aa).

It belongs to the bacterial ribosomal protein bL9 family.

In terms of biological role, binds to the 23S rRNA. The polypeptide is Large ribosomal subunit protein bL9 (Marinomonas sp. (strain MWYL1)).